The sequence spans 339 residues: MKIVFWGTPEFSVPILEALINSDHDVVGVVTQPDRRRSRGNKLIHSPVKTVALENNIPVLTPQNIRQESLIQQKIINLKADLNLVVAFGQILPLLILDSPPLGSWNIHASLLPRWRGAAPIQRAILEGDILTGICIMLMEEGLDTGPILLQKEFPIDVLRNSYQISSDLSSLSATTIIEALELIRTSSHFTKNLVEIYPKLIKQDVVNCDPIYAKRLTKKEFQIDWKRLSEEIHRTIMGLYPAAYTSLNGKRIKLHNSIPLTPSFSTYISNNYDSYIIDYISTSSYPGEILAVIPKLGFIVGTASYPILILNGQMEGRNSVSADILAKQIDLSIGIRFD.

A (6S)-5,6,7,8-tetrahydrofolate-binding site is contributed by 110–113; sequence SLLP.

Belongs to the Fmt family.

It catalyses the reaction L-methionyl-tRNA(fMet) + (6R)-10-formyltetrahydrofolate = N-formyl-L-methionyl-tRNA(fMet) + (6S)-5,6,7,8-tetrahydrofolate + H(+). In terms of biological role, attaches a formyl group to the free amino group of methionyl-tRNA(fMet). The formyl group appears to play a dual role in the initiator identity of N-formylmethionyl-tRNA by promoting its recognition by IF2 and preventing the misappropriation of this tRNA by the elongation apparatus. This Prochlorococcus marinus (strain MIT 9211) protein is Methionyl-tRNA formyltransferase.